Here is an 80-residue protein sequence, read N- to C-terminus: uncharacterized protein (80 aa).

This sequence to B.cereus similar ORF in glnR 5'region.

This is an uncharacterized protein from Bacillus cereus.